The chain runs to 445 residues: D-serine transporter DsdX (445 aa).

Topologically, residues 1–4 are cytoplasmic; that stretch reads MHSQ. Residues 5 to 25 traverse the membrane as a helical segment; that stretch reads IWVVSTLLISIVLIVLTIVKF. The Periplasmic portion of the chain corresponds to 26–28; the sequence is KFH. Residues 29 to 49 form a helical membrane-spanning segment; sequence PFLALLLASFFVGTMMGMGPL. Residues 50 to 56 are Cytoplasmic-facing; the sequence is DMVNAIE. A helical transmembrane segment spans residues 57 to 77; that stretch reads SGIGGTLGFLAAVIGLGTILG. Residues 78–105 are Periplasmic-facing; the sequence is KMMEVSGAAERIGLTLQRCRWLSVDVIM. A helical membrane pass occupies residues 106–126; it reads VLVGLICGITLFVEVGVVLLI. Topologically, residues 127-139 are cytoplasmic; sequence PLAFSIAKKTNTS. The chain crosses the membrane as a helical span at residues 140–160; sequence LLKLAIPLCTALMAVHCVVPP. Topologically, residues 161–177 are periplasmic; it reads HPAALYVANKLGADIGS. The helical transmembrane segment at 178–198 threads the bilayer; that stretch reads VIVYGLLVGLMASLIGGPLFL. Over 199 to 223 the chain is Cytoplasmic; it reads KFLGQRLPFKPVPTEFADLKVRDEK. Residues 224–244 form a helical membrane-spanning segment; the sequence is TLPSLGATLFTILLPIALMLV. The Periplasmic portion of the chain corresponds to 245–257; the sequence is KTIAELNMARESG. Residues 258 to 278 form a helical membrane-spanning segment; sequence LYILVEFIGNPITAMFIAVFV. The Cytoplasmic segment spans residues 279–301; sequence AYYVLGIRQHMSMGTMLTHTENG. The helical transmembrane segment at 302-322 threads the bilayer; it reads FGSIANILLIIGAGGAFNAIL. Topologically, residues 323–342 are periplasmic; the sequence is KSSSLADTLAVILSNMHMHP. 3 helical membrane-spanning segments follow: residues 343–363, 364–384, and 385–405; these read ILLA…ATVA, MMGA…ISPE, and IIAI…DSLF. Residues 406-424 are Cytoplasmic-facing; sequence WLVKQYCGATLNETFKYYT. A helical transmembrane segment spans residues 425 to 445; that stretch reads TATFIASVVALAGTFLLSFII.

This sequence belongs to the GntP permease family.

The protein localises to the cell inner membrane. In terms of biological role, a D-serine-specific transporter, may function as a H(+) symporter. In Escherichia coli (strain K12), this protein is D-serine transporter DsdX.